We begin with the raw amino-acid sequence, 712 residues long: Probable GTP diphosphokinase RSH3, chloroplastic (712 aa).

The transit peptide at 1-64 (MVVATTIALY…LLFSGASVKS (64 aa)) directs the protein to the chloroplast. Low complexity predominate over residues 65 to 74 (SSSSSSSHPS). The tract at residues 65–84 (SSSSSSSHPSVGEELASIRH) is disordered. Positions 237–338 (YLQHCVETAM…IKLADRLHNM (102 aa)) constitute an HD domain.

It belongs to the RelA/SpoT family.

The protein resides in the plastid. Its subcellular location is the chloroplast. The enzyme catalyses GTP + ATP = guanosine 3'-diphosphate 5'-triphosphate + AMP. Its function is as follows. Probable ppGpp (guanosine 3'-diphosphate 5'-diphosphate) synthetase that may be involved in a rapid plant ppGpp-mediated response to pathogens and other stresses. This is Probable GTP diphosphokinase RSH3, chloroplastic (RSH3) from Arabidopsis thaliana (Mouse-ear cress).